The chain runs to 429 residues: MAELIEEVSTATHASLNACDPIVVNSEALPMQALYQLSATGAQQQNQQIPIGLSNSLLYQQLAAHQQIAAQQHQQQLAVSAAHQTQNNIMLATSAPSLINHMENSTDGKVKDDPNSDYDLQLSIQQQLAAAAQAAQMGQTQIGPQIVGQQGQPVVATTAGSTNGSAAVTQPDPSTSSGPDGPKRLHVSNIPFRFRDPDLKTMFEKFGVVSDVEIIFNERGSKGFGFVTMERPQDAERARQELHGSMIEGRKIEVNCATARVHSKKVKPTGGILDQMNPLMAQSALAAQAQMNRALLLRSPLVAQSLLGRGAALIPGMQQPAFQLQAALAGNPLAQLQGQPLLFNAAALQTNALQQSAFGMDPAAVQAALLANEQARFQLAAAAAQGRIPSSGNASAFGEQYLSNALATASLPSYQMNPALRTLNRFTPY.

A compositionally biased stretch (low complexity) spans 156-180 (ATTAGSTNGSAAVTQPDPSTSSGPD). The tract at residues 156-188 (ATTAGSTNGSAAVTQPDPSTSSGPDGPKRLHVS) is disordered. One can recognise an RRM domain in the interval 183-259 (KRLHVSNIPF…RKIEVNCATA (77 aa)).

In terms of assembly, interacts with sup-12. In terms of tissue distribution, in males and hermaphrodites expressed in a subset of cells in the head and tail. Expressed in the pharynx, intestine and in muscles from the vulva and body wall.

It is found in the nucleus. Functionally, RNA-binding protein that regulates tissue-specific alternative splicing events by binding to 5'-UGCAUG-3' and 5'-GCACG-3' elements. Also binds to poly(A), poly(G), poly(C), or poly(U) stretches of RNA. Plays a role in the sex determination pathway and X chromosome dosage compensation, and together with sex-1 is involved in making the distinction between one and two X-chromosomes. Binds to 5'-GCAUG-3' and 5'-GCACG-3' elements in intron 6 of the pre-mRNA of the sex-determining factor xol-1 to promote its alternative splicing and together with sex-1 negatively regulates the expression of xol-1 to promote hermaphrodite development. Negatively regulates the expression of the active isoform of xol-1 (isoform b) by promoting intron 6 retention and the deletion of exon 7 coding sequences in hermaphrodite embryos. Furthermore, binding to the pre-mRNA of xol-1 can also direct the use of an alternative 3' splice site enabling the xol-1 transcript to be trans-spliced to unrelated genes on chromosome 2, which also leads to xol-1 exon 7 deletion. Does not seem to regulate the retention of introns 1 to 5 of xol-1 pre-mRNA. Plays a role in the association of the dosage compensation complex proteins dpy-27 and sdc-3 with the hermaphrodite X chromosomes. Binds to 5'-UGCAUG-3' elements in intron 7 of the pre-mRNA of unc-32 to promote its alternative splicing in neuronal tissues. Binds to 5'-UGCAUG-3' elements in intron 4 of the pre-mRNA of egl-15 to promote its alternative splicing in body wall muscle tissues. Promotes binding of RNA-binding protein sup-12 to target RNA. Plays a role in male mating behavior. The protein is Sex determination protein fox-1 of Caenorhabditis elegans.